Here is a 141-residue protein sequence, read N- to C-terminus: Hemoglobin subunit alpha (141 aa).

The 141-residue stretch at 1–141 (VLSPADKTNI…VSTVLTSKYR (141 aa)) folds into the Globin domain. Residue Ser3 is modified to Phosphoserine. Lys7 is modified (N6-succinyllysine). Thr8 is modified (phosphothreonine). Position 11 is an N6-succinyllysine (Lys11). Position 16 is an N6-acetyllysine; alternate (Lys16). Lys16 is modified (N6-succinyllysine; alternate). Tyr24 is subject to Phosphotyrosine. Ser35 is subject to Phosphoserine. Lys40 carries the post-translational modification N6-succinyllysine. Ser49 carries the phosphoserine modification. His58 is an O2 binding site. His87 contributes to the heme b binding site. Residue Ser102 is modified to Phosphoserine. The residue at position 108 (Thr108) is a Phosphothreonine. Ser124 carries the phosphoserine modification. Phosphothreonine occurs at positions 134 and 137. A Phosphoserine modification is found at Ser138.

This sequence belongs to the globin family. As to quaternary structure, heterotetramer of two alpha chains and two beta chains. Red blood cells.

Involved in oxygen transport from the lung to the various peripheral tissues. In terms of biological role, hemopressin acts as an antagonist peptide of the cannabinoid receptor CNR1. Hemopressin-binding efficiently blocks cannabinoid receptor CNR1 and subsequent signaling. This is Hemoglobin subunit alpha (HBA) from Vulpes vulpes (Red fox).